An 855-amino-acid chain; its full sequence is DNA mismatch repair protein MutS (855 aa).

618 to 625 (GPNMGGKS) contributes to the ATP binding site.

It belongs to the DNA mismatch repair MutS family.

This protein is involved in the repair of mismatches in DNA. It is possible that it carries out the mismatch recognition step. This protein has a weak ATPase activity. This chain is DNA mismatch repair protein MutS, found in Shewanella loihica (strain ATCC BAA-1088 / PV-4).